A 435-amino-acid chain; its full sequence is MVDEDKKSGTRVFKKTSPNGKITTYLGKRDFIDRGDYVDLIDGMVLIDEEYIKDNRKVTAHLLAAFRYGREDLDVLGLTFRKDLISETFQVYPQTDKSISRPLSRLQERLKRKLGANAFPFWFEVAPKSASSVTLQPAPGDTGKPCGVDYELKTFVAVTDGSSGEKPKKSALSNTVRLAIRKLTYAPFESRPQPMVDVSKYFMMSSGLLHMEVSLDKEMYYHGESISVNVHIQNNSNKTVKKLKIYIIQVADICLFTTASYSCEVARIESNEGFPVGPGGTLSKVFAVCPLLSNNKDKRGLALDGQLKHEDTNLASSTILDSKTSKESLGIVVQYRVKVRAVLGPLNGELFAELPFTLTHSKPPESPERTDRGLPSIEATNGSEPVDIDLIQLHEELEPRYDDDLIFEDFARMRLHGNDSEDQPSPSANLPPSLL.

The disordered stretch occupies residues 358 to 382 (LTHSKPPESPERTDRGLPSIEATNG). The span at 362–372 (KPPESPERTDR) shows a compositional bias: basic and acidic residues. The short motif at 390–394 (LIQLH) is the Clathrin box element. Positions 404 to 414 (DLIFEDFARMR) match the [DE]-X(1,2)-F-X-X-[FL]-X-X-X-R motif motif. The tract at residues 416-435 (HGNDSEDQPSPSANLPPSLL) is disordered. Low complexity predominate over residues 424 to 435 (PSPSANLPPSLL).

It belongs to the arrestin family. As to quaternary structure, component of a complex composed of arr-1, daf-18 and mpz-1. Within the complex, interacts (via C-terminus) with mpz-1 (via PDZ domain) and phosphatase daf-18. May interact (via C-terminus) with clathrin chc-1 and beta-2 adaptin (AP2) apb-1. As to expression, expressed in head neurons, nerve ring and ventral nerve cord (at protein level). Expressed in the nervous system including the nerve ring and the ventral and dorsal nerve cords. Highly expressed in amphid chemosensory neurons AWA, AWB, AWC, ADL and ASH, and in hermaphrodite specific neuron HSN. Also expressed in the intestine.

The protein resides in the perikaryon. Its subcellular location is the cell projection. It localises to the dendrite. Its function is as follows. Adapter protein required for olfactory adaptation and recovery to volatile odorants, probably by desensitization of G-protein coupled receptors (GPCR). May play a role in clathrin-mediated GPCR endocytosis. Acts as a positive regulator of insulin-like daf-2 signaling pathway probably by forming a complex with mpz-1 and phosphatase daf-18 likely resulting in daf-18 inhibition. Involved in egg-laying. The polypeptide is Beta-arrestin arr-1 (Caenorhabditis elegans).